The sequence spans 495 residues: UDP-glycosyltransferase 73E1 (495 aa).

UDP-alpha-D-glucose contacts are provided by residues S299, W355–A356, H373–E381, and F395–Q398.

Belongs to the UDP-glycosyltransferase family.

May glycosylate diterpenes or flavonols in leaves. In Stevia rebaudiana (Stevia), this protein is UDP-glycosyltransferase 73E1.